The sequence spans 239 residues: Ribosomal RNA small subunit methyltransferase G (239 aa).

S-adenosyl-L-methionine contacts are provided by residues G79, F84, 130–131 (AE), and R149.

This sequence belongs to the methyltransferase superfamily. RNA methyltransferase RsmG family.

The protein localises to the cytoplasm. Specifically methylates the N7 position of a guanine in 16S rRNA. The protein is Ribosomal RNA small subunit methyltransferase G of Pelotomaculum thermopropionicum (strain DSM 13744 / JCM 10971 / SI).